The sequence spans 504 residues: Maturase K (504 aa).

The protein belongs to the intron maturase 2 family. MatK subfamily.

Its subcellular location is the plastid. The protein resides in the chloroplast. Its function is as follows. Usually encoded in the trnK tRNA gene intron. Probably assists in splicing its own and other chloroplast group II introns. The protein is Maturase K of Vauquelinia californica (Arizona rosewood).